A 121-amino-acid polypeptide reads, in one-letter code: Small ribosomal subunit protein uS13 (121 aa).

The interval 97–121 (VRGQRTRTNARTRRGARKTVAGKKK) is disordered. Residues 100–121 (QRTRTNARTRRGARKTVAGKKK) are compositionally biased toward basic residues.

Belongs to the universal ribosomal protein uS13 family. As to quaternary structure, part of the 30S ribosomal subunit. Forms a loose heterodimer with protein S19. Forms two bridges to the 50S subunit in the 70S ribosome.

Located at the top of the head of the 30S subunit, it contacts several helices of the 16S rRNA. In the 70S ribosome it contacts the 23S rRNA (bridge B1a) and protein L5 of the 50S subunit (bridge B1b), connecting the 2 subunits; these bridges are implicated in subunit movement. Contacts the tRNAs in the A and P-sites. The chain is Small ribosomal subunit protein uS13 from Synechococcus sp. (strain CC9311).